Consider the following 490-residue polypeptide: Hexokinase (490 aa).

Residues 21-466 enclose the Hexokinase domain; the sequence is QNLLEHIKHF…SGVGAALIAA (446 aa). The hexokinase small subdomain stretch occupies residues 75–209; the sequence is DGKETGTFLA…GLPIKVAALI (135 aa). A hexokinase large subdomain region spans residues 210–455; the sequence is NDTTGTLIAS…DKVTIHAAED (246 aa).

Belongs to the hexokinase family. Monomer.

The catalysed reaction is a D-hexose + ATP = a D-hexose 6-phosphate + ADP + H(+). It catalyses the reaction D-fructose + ATP = D-fructose 6-phosphate + ADP + H(+). The enzyme catalyses D-glucose + ATP = D-glucose 6-phosphate + ADP + H(+). Its pathway is carbohydrate metabolism; hexose metabolism. It participates in carbohydrate degradation; glycolysis; D-glyceraldehyde 3-phosphate and glycerone phosphate from D-glucose: step 1/4. Its function is as follows. Catalyzes the phosphorylation of hexose, such as D-glucose and D-fructose, to hexose 6-phosphate (D-glucose 6-phosphate and D-fructose 6-phosphate, respectively). Mediates the initial step of glycolysis by catalyzing phosphorylation of D-glucose to D-glucose 6-phosphate. This chain is Hexokinase (hxkA), found in Emericella nidulans (strain FGSC A4 / ATCC 38163 / CBS 112.46 / NRRL 194 / M139) (Aspergillus nidulans).